The primary structure comprises 446 residues: tRNA-2-methylthio-N(6)-dimethylallyladenosine synthase (446 aa).

One can recognise an MTTase N-terminal domain in the interval 3–120 (KKLFIETHGC…LPEMIDAARS (118 aa)). [4Fe-4S] cluster contacts are provided by Cys-12, Cys-49, Cys-83, Cys-157, Cys-161, and Cys-164. Residues 143–375 (RVDGPTAFVS…QGRIHQQGYE (233 aa)) form the Radical SAM core domain. The region spanning 378 to 442 (RRMVGSTQRI…PHSLRGTLIE (65 aa)) is the TRAM domain.

The protein belongs to the methylthiotransferase family. MiaB subfamily. In terms of assembly, monomer. The cofactor is [4Fe-4S] cluster.

Its subcellular location is the cytoplasm. The enzyme catalyses N(6)-dimethylallyladenosine(37) in tRNA + (sulfur carrier)-SH + AH2 + 2 S-adenosyl-L-methionine = 2-methylsulfanyl-N(6)-dimethylallyladenosine(37) in tRNA + (sulfur carrier)-H + 5'-deoxyadenosine + L-methionine + A + S-adenosyl-L-homocysteine + 2 H(+). Its function is as follows. Catalyzes the methylthiolation of N6-(dimethylallyl)adenosine (i(6)A), leading to the formation of 2-methylthio-N6-(dimethylallyl)adenosine (ms(2)i(6)A) at position 37 in tRNAs that read codons beginning with uridine. This Pseudomonas paraeruginosa (strain DSM 24068 / PA7) (Pseudomonas aeruginosa (strain PA7)) protein is tRNA-2-methylthio-N(6)-dimethylallyladenosine synthase.